Here is a 230-residue protein sequence, read N- to C-terminus: MKDLPIIALDFESKEKVNQFLDLFDESLFVKVGMELFYQEGPQLINEIKERGHDVFLDLKLHDIPNTVGKAMEGLAKLNVDLVNVHAAGGVKMMSEAIKGLRKHNQDTKIIAVTQLTSTTEDMLRHEQNIQTSIEEAVLNYAKLANAAGLDGVVCSPLESRMLTEKLGTSFLKVTPGIRPKGASQNDQHRITTPEEARQLGSTHIVVGRPITQSDNPVESYHKIKESWLV.

Substrate contacts are provided by residues Asp-10, Lys-31, 58–67, Thr-117, Arg-179, Gln-188, Gly-208, and Arg-209; that span reads DLKLHDIPNT. Residue Lys-60 is the Proton donor of the active site.

Belongs to the OMP decarboxylase family. Type 1 subfamily. In terms of assembly, homodimer.

It catalyses the reaction orotidine 5'-phosphate + H(+) = UMP + CO2. It participates in pyrimidine metabolism; UMP biosynthesis via de novo pathway; UMP from orotate: step 2/2. Functionally, catalyzes the decarboxylation of orotidine 5'-monophosphate (OMP) to uridine 5'-monophosphate (UMP). This Staphylococcus aureus (strain USA300) protein is Orotidine 5'-phosphate decarboxylase.